Here is a 540-residue protein sequence, read N- to C-terminus: CUB domain-containing protein 2 (540 aa).

The N-terminal stretch at 1–24 (MLAELGACLLLAMVLLDSDPGTQA) is a signal peptide. Topologically, residues 25–516 (MEGVKCGGVL…GTMVTQDTSD (492 aa)) are extracellular. 6 cysteine pairs are disulfide-bonded: cysteine 30–cysteine 56, cysteine 83–cysteine 106, cysteine 145–cysteine 171, cysteine 198–cysteine 218, cysteine 257–cysteine 283, and cysteine 314–cysteine 336. CUB domains follow at residues 30 to 143 (CGGV…YQKD), 145 to 255 (CGGV…YFSG), and 257 to 373 (CQEV…YIGV). N-linked (GlcNAc...) asparagine glycosylation occurs at asparagine 40. Asparagine 267 carries N-linked (GlcNAc...) asparagine glycosylation. Residues asparagine 377, asparagine 435, and asparagine 436 are each glycosylated (N-linked (GlcNAc...) asparagine). Residues 517 to 537 (IVFLGLCILAGVLMIIAIVVL) traverse the membrane as a helical segment. Over 538 to 540 (MLL) the chain is Cytoplasmic.

It localises to the membrane. The sequence is that of CUB domain-containing protein 2 (Cdcp2) from Mus musculus (Mouse).